The primary structure comprises 438 residues: Transposon Ty2-F Gag polyprotein (438 aa).

Polar residues-rich tracts occupy residues 1–11 (MESQQLHQNPH), 19–39 (ASVT…SASN), and 49–60 (KVNSQQETTPGT). Disordered stretches follow at residues 1–86 (MESQ…GQYQ), 366–397 (VSRT…AKAH), and 419–438 (SSQY…TERI). The tract at residues 295 to 397 (ENNINVSDRL…SSKPRAAKAH (103 aa)) is RNA-binding. The segment covering 369–381 (TSPNTTNTKVTTR) has biased composition (low complexity).

Homotrimer.

It is found in the cytoplasm. Its function is as follows. Capsid protein (CA) is the structural component of the virus-like particle (VLP), forming the shell that encapsulates the retrotransposons dimeric RNA genome. The particles are assembled from trimer-clustered units and there are holes in the capsid shells that allow for the diffusion of macromolecules. CA also has nucleocapsid-like chaperone activity, promoting primer tRNA(i)-Met annealing to the multipartite primer-binding site (PBS), dimerization of Ty2 RNA and initiation of reverse transcription. The sequence is that of Transposon Ty2-F Gag polyprotein (TY2A-F) from Saccharomyces cerevisiae (strain ATCC 204508 / S288c) (Baker's yeast).